Consider the following 166-residue polypeptide: Small ribosomal subunit protein uS5 (166 aa).

The region spanning 12–75 (YIEKLVQVNR…EAARRNMIQV (64 aa)) is the S5 DRBM domain.

It belongs to the universal ribosomal protein uS5 family. Part of the 30S ribosomal subunit. Contacts proteins S4 and S8.

Its function is as follows. With S4 and S12 plays an important role in translational accuracy. In terms of biological role, located at the back of the 30S subunit body where it stabilizes the conformation of the head with respect to the body. The protein is Small ribosomal subunit protein uS5 of Pseudomonas syringae pv. tomato (strain ATCC BAA-871 / DC3000).